A 532-amino-acid polypeptide reads, in one-letter code: Glycerophosphocholine permease GIT4 (532 aa).

6 helical membrane passes run 55–75 (LWPA…NAGI), 98–118 (NIGS…GYIS), 126–146 (GMLT…VASW), 150–170 (VQGF…AIGA), 201–221 (AMID…LWIF), and 229–249 (VWRL…FIRL). Asn-266 carries N-linked (GlcNAc...) asparagine glycosylation. A helical transmembrane segment spans residues 272 to 292 (WWLIIKFYWFRLTVVSLIWFI). N-linked (GlcNAc...) asparagine glycosylation is present at Asn-314. 3 helical membrane-spanning segments follow: residues 321 to 341 (WGWS…GAFI), 349 to 369 (LTLA…SACL), and 375 to 395 (HVAG…FGPG). N-linked (GlcNAc...) asparagine glycosylation is present at Asn-396. 2 helical membrane-spanning segments follow: residues 416–436 (GIAA…FPAI) and 450–470 (VPFY…IFFV).

Belongs to the major facilitator superfamily. Sugar transporter (TC 2.A.1.1) family.

Its subcellular location is the cell membrane. The enzyme catalyses sn-glycerol 3-phosphocholine(out) = sn-glycerol 3-phosphocholine(in). Functionally, glycerophosphodiester transporter that mediates uptake of glycerophosphocholine (GroPCho) with GIT3. Does not possess detectable glycerophosphoinositol (GroPIns) transport activity. The expanded ability to utilize GroPIns and GroPCho results from the organism's pathogenic nature and its need to occupy a variety of environments within its host organism. This possibility is buttressed by the fact that GroPIns and GroPCho are present and abundant in human fluids. This Candida albicans (strain SC5314 / ATCC MYA-2876) (Yeast) protein is Glycerophosphocholine permease GIT4.